Here is a 185-residue protein sequence, read N- to C-terminus: Ribosome-recycling factor (185 aa).

Belongs to the RRF family.

It is found in the cytoplasm. Responsible for the release of ribosomes from messenger RNA at the termination of protein biosynthesis. May increase the efficiency of translation by recycling ribosomes from one round of translation to another. The sequence is that of Ribosome-recycling factor from Legionella pneumophila (strain Paris).